The primary structure comprises 140 residues: ATP synthase epsilon chain (140 aa).

The protein belongs to the ATPase epsilon chain family. As to quaternary structure, F-type ATPases have 2 components, CF(1) - the catalytic core - and CF(0) - the membrane proton channel. CF(1) has five subunits: alpha(3), beta(3), gamma(1), delta(1), epsilon(1). CF(0) has three main subunits: a, b and c.

The protein localises to the cell inner membrane. Its function is as follows. Produces ATP from ADP in the presence of a proton gradient across the membrane. The sequence is that of ATP synthase epsilon chain from Neisseria meningitidis serogroup B (strain ATCC BAA-335 / MC58).